Consider the following 260-residue polypeptide: MGYLKGFALYISILILIVFIAGCGKSDKTKEDSKEAQIKKSFEKTLDMYPIKNLEDLYDKEGYRDGEFKKGDKGTWTLLTSFAKSNKPGEIDDEGMVLFLNRNIKKATGYYYTSKVHDEFNEKEHQKKYHVELKNNKIVLLDNVEDSKLKNKIENFKFFSQYADFRDFKNYKNGNISSADNVPSFDAEYQISNTDKNVKKLREVYPITTKKSPVLKLHIDGDIKGSSIGYKNIEFNFSKVKDEETAVRDFVNFGPSDGVS.

A signal peptide spans 1–22; it reads MGYLKGFALYISILILIVFIAG. C23 carries the N-palmitoyl cysteine lipid modification. A lipid anchor (S-diacylglycerol cysteine) is attached at C23.

Belongs to the staphylococcal tandem lipoprotein family.

It is found in the cell membrane. This is an uncharacterized protein from Staphylococcus aureus (strain MSSA476).